A 186-amino-acid chain; its full sequence is Adrenodoxin, mitochondrial (186 aa).

Residues 1 to 58 constitute a mitochondrion transit peptide; the sequence is MAVRLLRVASAALGDTAVRWQPLVGPRAGNRGPGGSIWLGLGGRAAAARTLSLSARAW. Residue S61 is modified to Phosphoserine. K64 is modified (N6-acetyllysine; alternate). K64 carries the post-translational modification N6-succinyllysine; alternate. One can recognise a 2Fe-2S ferredoxin-type domain in the interval 65-169; the sequence is ITVHFINRDG…NMTVRVPEAV (105 aa). Residues C104, C110, C113, and C150 each contribute to the [2Fe-2S] cluster site. K156 is modified (N6-succinyllysine). S175 is subject to Phosphoserine.

It belongs to the adrenodoxin/putidaredoxin family. Interacts with CYP11A1. It depends on [2Fe-2S] cluster as a cofactor.

It localises to the mitochondrion matrix. Functionally, essential for the synthesis of various steroid hormones. Participates in the reduction of mitochondrial cytochrome P450 for steroidogenesis. Transfers electrons from adrenodoxin reductase to CYP11A1, a cytochrome P450 that catalyzes cholesterol side-chain cleavage. Does not form a ternary complex with adrenodoxin reductase and CYP11A1 but shuttles between the two enzymes to transfer electrons. In Sus scrofa (Pig), this protein is Adrenodoxin, mitochondrial (FDX1).